Here is a 599-residue protein sequence, read N- to C-terminus: Dual specificity tyrosine-phosphorylation-regulated kinase 2 (599 aa).

The interval 1–55 (MLTRKPSAAAPAAYPTGRGGDTAVRQLQASPGIGAGAPRSGVGTGPPSPIALPPL) is disordered. A Phosphoserine modification is found at Ser30. Phosphothreonine; by ATM is present on Thr104. Positions 187–189 (KKR) match the Nuclear localization signal motif. Positions 220 to 533 (YEVLKVIGKG…PGQALRHPWL (314 aa)) constitute a Protein kinase domain. Residues 226-234 (IGKGSFGQV), Lys249, and 299-302 (FELL) contribute to the ATP site. Asp346 serves as the catalytic Proton acceptor. Thr379 is subject to Phosphothreonine; by MAP3K10. A Phosphotyrosine; by autocatalysis modification is found at Tyr380. Ser440 is subject to Phosphoserine; by ATM. A Phosphoserine; by MAP3K10 modification is found at Ser447.

It belongs to the protein kinase superfamily. CMGC Ser/Thr protein kinase family. MNB/DYRK subfamily. Component of an E3 ligase complex containing DYRK2, EDD/UBR5, DDB1 and DCAF1 (EDVP complex). Interacts directly with EDD/UBR5, DDB1 and DCAF1. Interacts with SIAH2 and MDM2. Interacts with MAP3K10 and NFATC1. May also interact with CCNL2. Mg(2+) is required as a cofactor. Requires Mn(2+) as cofactor. Autophosphorylates cotranslationally on the second tyrosine residue in the Tyr-X-Tyr motif in the activation loop, but once mature, does not have any protein tyrosine kinase activity. Phosphorylated at Thr-104 and Ser-440 by ATM in response to genotoxic stress. Post-translationally, under normal conditions, polyubiquitinated in the nucleus by MDM2, leading to its proteasomal degradation. Phosphorylation on Thr-104 and Ser-440 by ATM in response to genotoxic stress disrupts MDM2 binding and prevents MDM2-mediated ubiquitination and subsequent proteasomal degradation. Polyubiquitinated by SIAH2, leading to its proteasomal degradation. Polyubiquitinated by SIAH2 occurs under normal conditions, and is enhanced in response to hypoxia.

It is found in the cytoplasm. The protein localises to the nucleus. It carries out the reaction L-seryl-[protein] + ATP = O-phospho-L-seryl-[protein] + ADP + H(+). The enzyme catalyses L-threonyl-[protein] + ATP = O-phospho-L-threonyl-[protein] + ADP + H(+). The catalysed reaction is L-tyrosyl-[protein] + ATP = O-phospho-L-tyrosyl-[protein] + ADP + H(+). Its activity is regulated as follows. Activated by autophosphorylation on the second tyrosine residue in the Tyr-X-Tyr motif in the activation loop. In terms of biological role, serine/threonine-protein kinase involved in the regulation of the mitotic cell cycle, cell proliferation, apoptosis, organization of the cytoskeleton and neurite outgrowth. Functions in part via its role in ubiquitin-dependent proteasomal protein degradation. Functions downstream of ATM and phosphorylates p53/TP53 at 'Ser-46', and thereby contributes to the induction of apoptosis in response to DNA damage. Phosphorylates NFATC1, and thereby inhibits its accumulation in the nucleus and its transcription factor activity. Phosphorylates EIF2B5 at 'Ser-544', enabling its subsequent phosphorylation and inhibition by GSK3B. Likewise, phosphorylation of NFATC1, CRMP2/DPYSL2 and CRMP4/DPYSL3 promotes their subsequent phosphorylation by GSK3B. May play a general role in the priming of GSK3 substrates. Inactivates GYS1 by phosphorylation at 'Ser-641', and potentially also a second phosphorylation site, thus regulating glycogen synthesis. Mediates EDVP E3 ligase complex formation and is required for the phosphorylation and subsequent degradation of KATNA1. Phosphorylates TERT at 'Ser-457', promoting TERT ubiquitination by the EDVP complex. Phosphorylates SIAH2, and thereby increases its ubiquitin ligase activity. Promotes the proteasomal degradation of MYC and JUN, and thereby regulates progress through the mitotic cell cycle and cell proliferation. Promotes proteasomal degradation of GLI2 and GLI3, and thereby plays a role in smoothened and sonic hedgehog signaling. Phosphorylates CRMP2/DPYSL2, CRMP4/DPYSL3, DCX, EIF2B5, EIF4EBP1, GLI2, GLI3, GYS1, JUN, MDM2, MYC, NFATC1, p53/TP53, TAU/MAPT and KATNA1. Can phosphorylate histone H1, histone H3 and histone H2B (in vitro). Can phosphorylate CARHSP1 (in vitro). Plays a role in cytoskeleton organization and neurite outgrowth via its phosphorylation of DCX. This chain is Dual specificity tyrosine-phosphorylation-regulated kinase 2, found in Mus musculus (Mouse).